Consider the following 203-residue polypeptide: Dual-action ribosomal maturation protein DarP (203 aa).

Residues 1-13 show a composition bias toward polar residues; sequence MQPMTRNSRNSPG. Positions 1–39 are disordered; the sequence is MQPMTRNSRNSPGSRFPGAFAPEPDMDEPKSKSQKKRDM. A compositionally biased stretch (basic and acidic residues) spans 27 to 39; the sequence is DEPKSKSQKKRDM.

This sequence belongs to the DarP family.

The protein localises to the cytoplasm. In terms of biological role, member of a network of 50S ribosomal subunit biogenesis factors which assembles along the 30S-50S interface, preventing incorrect 23S rRNA structures from forming. Promotes peptidyl transferase center (PTC) maturation. The chain is Dual-action ribosomal maturation protein DarP from Cupriavidus pinatubonensis (strain JMP 134 / LMG 1197) (Cupriavidus necator (strain JMP 134)).